The chain runs to 401 residues: Formate-dependent phosphoribosylglycinamide formyltransferase (401 aa).

N(1)-(5-phospho-beta-D-ribosyl)glycinamide is bound by residues 22–23 (EL) and E82. ATP contacts are provided by residues R115, K157, 162 to 167 (SSGKGQ), 197 to 200 (EGFV), and E205. The 196-residue stretch at 120 to 315 (RLAAETLALP…EFELHARAIL (196 aa)) folds into the ATP-grasp domain. Mg(2+) contacts are provided by E274 and E286. N(1)-(5-phospho-beta-D-ribosyl)glycinamide-binding positions include D293, K362, and 369–370 (RR).

The protein belongs to the PurK/PurT family. Homodimer.

The catalysed reaction is N(1)-(5-phospho-beta-D-ribosyl)glycinamide + formate + ATP = N(2)-formyl-N(1)-(5-phospho-beta-D-ribosyl)glycinamide + ADP + phosphate + H(+). Its pathway is purine metabolism; IMP biosynthesis via de novo pathway; N(2)-formyl-N(1)-(5-phospho-D-ribosyl)glycinamide from N(1)-(5-phospho-D-ribosyl)glycinamide (formate route): step 1/1. Involved in the de novo purine biosynthesis. Catalyzes the transfer of formate to 5-phospho-ribosyl-glycinamide (GAR), producing 5-phospho-ribosyl-N-formylglycinamide (FGAR). Formate is provided by PurU via hydrolysis of 10-formyl-tetrahydrofolate. This Polaromonas naphthalenivorans (strain CJ2) protein is Formate-dependent phosphoribosylglycinamide formyltransferase.